Consider the following 335-residue polypeptide: Phenylalanine--tRNA ligase alpha subunit (335 aa).

Position 262 (glutamate 262) interacts with Mg(2+).

This sequence belongs to the class-II aminoacyl-tRNA synthetase family. Phe-tRNA synthetase alpha subunit type 1 subfamily. Tetramer of two alpha and two beta subunits. Mg(2+) is required as a cofactor.

It localises to the cytoplasm. It catalyses the reaction tRNA(Phe) + L-phenylalanine + ATP = L-phenylalanyl-tRNA(Phe) + AMP + diphosphate + H(+). The chain is Phenylalanine--tRNA ligase alpha subunit from Prochlorococcus marinus (strain NATL2A).